The following is a 349-amino-acid chain: Protein Wnt-7b (349 aa).

The first 24 residues, M1 to G24, serve as a signal peptide directing secretion. 5 cysteine pairs are disulfide-bonded: C73–C84, C123–C131, C133–C152, C200–C214, and C202–C209. N83 and N127 each carry an N-linked (GlcNAc...) asparagine glycan. Residue S206 is the site of O-palmitoleoyl serine; by PORCN attachment. The disordered linker stretch occupies residues V238–T266. 6 disulfides stabilise this stretch: C278/C309, C294/C304, C308/C348, C324/C339, C326/C336, and C331/C332. N-linked (GlcNAc...) asparagine glycosylation occurs at N295.

Belongs to the Wnt family. In terms of assembly, forms a soluble 1:1 complex with AFM; this prevents oligomerization and is required for prolonged biological activity. The complex with AFM may represent the physiological form in body fluids. Interacts with FZD1 and FZD10. Interacts with FZD4 (in vitro). Interacts with PORCN. Interacts with glypican GPC3. Interacts (via intrinsically disordered linker region) with RECK; interaction with RECK confers ligand selectivity for Wnt7 in brain endothelial cells and allows these cells to selectively respond to Wnt7. Palmitoleoylation is required for efficient binding to frizzled receptors. Depalmitoleoylation leads to Wnt signaling pathway inhibition.

It localises to the secreted. The protein resides in the extracellular space. Its subcellular location is the extracellular matrix. Ligand for members of the frizzled family of seven transmembrane receptors that functions in the canonical Wnt/beta-catenin signaling pathway. Required for normal fusion of the chorion and the allantois during placenta development. Required for central nervous system (CNS) angiogenesis and blood-brain barrier regulation. The polypeptide is Protein Wnt-7b (Wnt7b) (Mus musculus (Mouse)).